A 780-amino-acid polypeptide reads, in one-letter code: ATP-dependent 6-phosphofructokinase, muscle type (780 aa).

Thr-2 carries the N-acetylthreonine modification. An N-terminal catalytic PFK domain 1 region spans residues 2–390; sequence THEEHHATKT…NWEVYKLLAH (389 aa). ATP-binding positions include Gly-25, 88 to 89, and 118 to 121; these read RC and GDGS. Asp-119 contacts Mg(2+). A Phosphoserine modification is found at Ser-133. Residues 164–166, Arg-201, 208–210, Glu-264, Arg-292, and 298–301 contribute to the substrate site; these read SID, MGR, and HVQR. The Proton acceptor role is filled by Asp-166. The residue at position 377 (Ser-377) is a Phosphoserine. Residues 391-401 are interdomain linker; that stretch reads VRPPVSKSGSH. Residues 402–780 form a C-terminal regulatory PFK domain 2 region; that stretch reads TVAVMNVGAP…TRKRSGEAAV (379 aa). Beta-D-fructose 2,6-bisphosphate-binding positions include Arg-471 and 528 to 532; that span reads TVSNN. O-linked (GlcNAc) serine glycosylation is present at Ser-530. Lys-557 bears the N6-(2-hydroxyisobutyryl)lysine mark. Residues Arg-566, 573-575, Glu-629, Arg-655, and 661-664 contribute to the beta-D-fructose 2,6-bisphosphate site; these read MGG and HMQQ. Ser-667 bears the Phosphoserine mark. A beta-D-fructose 2,6-bisphosphate-binding site is contributed by Arg-735. Ser-775 carries the post-translational modification Phosphoserine.

The protein belongs to the phosphofructokinase type A (PFKA) family. ATP-dependent PFK group I subfamily. Eukaryotic two domain clade 'E' sub-subfamily. Homo- and heterotetramers. Phosphofructokinase (PFK) enzyme functions as a tetramer composed of different combinations of 3 types of subunits, called PFKM (M), PFKL (L) and PFKP (P). The composition of the PFK tetramer differs according to the tissue type it is present in. The kinetic and regulatory properties of the tetrameric enzyme are dependent on the subunit composition, hence can vary across tissues. Interacts (via C-terminus) with HK1 (via N-terminal spermatogenic cell-specific region). The cofactor is Mg(2+). In terms of processing, glcNAcylation decreases enzyme activity.

It is found in the cytoplasm. It carries out the reaction beta-D-fructose 6-phosphate + ATP = beta-D-fructose 1,6-bisphosphate + ADP + H(+). The protein operates within carbohydrate degradation; glycolysis; D-glyceraldehyde 3-phosphate and glycerone phosphate from D-glucose: step 3/4. Its activity is regulated as follows. Allosterically activated by ADP, AMP, or fructose 2,6-bisphosphate, and allosterically inhibited by ATP or citrate. Its function is as follows. Catalyzes the phosphorylation of D-fructose 6-phosphate to fructose 1,6-bisphosphate by ATP, the first committing step of glycolysis. The chain is ATP-dependent 6-phosphofructokinase, muscle type (PFKM) from Pongo abelii (Sumatran orangutan).